The following is a 483-amino-acid chain: MDQMAKIDEKKPHVVFIPFPAQSHIKCMLKLARILHQKGLYITFINTDTNHERLVASGGTQWLENAPGFWFKTVPDGFGSAKDDGVKPTDALRELMDYLKTNFFDLFLDLVLKLEVPATCIICDGCMTFANTIRAAEKLNIPVILFWTMAACGFMAFYQAKVLKEKEIVPVKDETYLTNGYLDMEIDWIPGMKRIRLRDLPEFILATKQNYFAFEFLFETAQLADKVSHMIIHTFEELEASLVSEIKSIFPNVYTIGPLQLLLNKITQKETNNDSYSLWKEEPECVEWLNSKEPNSVVYVNFGSLAVMSLQDLVEFGWGLVNSNHYFLWIIRANLIDGKPAVMPQELKEAMNEKGFVGSWCSQEEVLNHPAVGGFLTHCGWGSIIESLSAGVPMLGWPSIGDQRANCRQMCKEWEVGMEIGKNVKRDEVEKLVRMLMEGLEGERMRKKALEWKKSATLATCCNGSSSLDVEKLANEIKKLSRN.

UDP-alpha-D-glucose is bound by residues Ser304, 360–361 (WC), 378–386 (HCGWGSIIE), and 400–403 (IGDQ).

Belongs to the UDP-glycosyltransferase family.

Functionally, may glycosylate diterpenes or flavonols in leaves. The protein is UDP-glycosyltransferase 85C1 of Stevia rebaudiana (Stevia).